Here is a 596-residue protein sequence, read N- to C-terminus: Aspartate--tRNA(Asp/Asn) ligase (596 aa).

Glu175 contacts L-aspartate. Residues 199–202 (QMFK) are aspartate. Residues Arg221 and His451 each coordinate L-aspartate. 221 to 223 (RDE) provides a ligand contact to ATP. Residue Glu485 participates in ATP binding. Arg492 provides a ligand contact to L-aspartate. Residue 537–540 (GVDR) participates in ATP binding.

Belongs to the class-II aminoacyl-tRNA synthetase family. Type 1 subfamily. Homodimer.

It is found in the cytoplasm. It carries out the reaction tRNA(Asx) + L-aspartate + ATP = L-aspartyl-tRNA(Asx) + AMP + diphosphate. Functionally, aspartyl-tRNA synthetase with relaxed tRNA specificity since it is able to aspartylate not only its cognate tRNA(Asp) but also tRNA(Asn). Reaction proceeds in two steps: L-aspartate is first activated by ATP to form Asp-AMP and then transferred to the acceptor end of tRNA(Asp/Asn). This Zymomonas mobilis subsp. mobilis (strain ATCC 31821 / ZM4 / CP4) protein is Aspartate--tRNA(Asp/Asn) ligase.